We begin with the raw amino-acid sequence, 395 residues long: S-adenosylmethionine synthase (395 aa).

Histidine 16 contacts ATP. Aspartate 18 lines the Mg(2+) pocket. K(+) is bound at residue glutamate 44. The L-methionine site is built by glutamate 57 and glutamine 100. The tract at residues 100-110 (QSPDIAQGVDD) is flexible loop. Residues 174–176 (DAK), 241–242 (RF), aspartate 250, 256–257 (RK), alanine 273, and lysine 277 contribute to the ATP site. Aspartate 250 contributes to the L-methionine binding site. Lysine 281 lines the L-methionine pocket.

Belongs to the AdoMet synthase family. Homotetramer; dimer of dimers. The cofactor is Mg(2+). Requires K(+) as cofactor.

Its subcellular location is the cytoplasm. It carries out the reaction L-methionine + ATP + H2O = S-adenosyl-L-methionine + phosphate + diphosphate. It functions in the pathway amino-acid biosynthesis; S-adenosyl-L-methionine biosynthesis; S-adenosyl-L-methionine from L-methionine: step 1/1. Functionally, catalyzes the formation of S-adenosylmethionine (AdoMet) from methionine and ATP. The overall synthetic reaction is composed of two sequential steps, AdoMet formation and the subsequent tripolyphosphate hydrolysis which occurs prior to release of AdoMet from the enzyme. The sequence is that of S-adenosylmethionine synthase from Levilactobacillus brevis (strain ATCC 367 / BCRC 12310 / CIP 105137 / JCM 1170 / LMG 11437 / NCIMB 947 / NCTC 947) (Lactobacillus brevis).